We begin with the raw amino-acid sequence, 326 residues long: L-lactate dehydrogenase (326 aa).

39 to 60 (DVVTGMPEGKALDDSQATSIAD) lines the NAD(+) pocket. Arginine 99, asparagine 131, and arginine 162 together coordinate substrate. Asparagine 131 serves as a coordination point for NAD(+). The active-site Proton acceptor is the histidine 186.

It belongs to the LDH/MDH superfamily. LDH family. In terms of assembly, homotetramer.

The catalysed reaction is (S)-lactate + NAD(+) = pyruvate + NADH + H(+). Its pathway is fermentation; pyruvate fermentation to lactate; (S)-lactate from pyruvate: step 1/1. This Toxoplasma gondii protein is L-lactate dehydrogenase.